The following is a 334-amino-acid chain: Holliday junction branch migration complex subunit RuvB (334 aa).

Residues 1–182 (MDKRMVDQEF…FGVHLRLEYY (182 aa)) form a large ATPase domain (RuvB-L) region. ATP contacts are provided by residues L21, R22, G63, K66, T67, T68, 129 to 131 (EDF), R172, Y182, and R219. A Mg(2+)-binding site is contributed by T67. The tract at residues 183-253 (NENDLKEIIT…TTKRALQLLQ (71 aa)) is small ATPAse domain (RuvB-S). The head domain (RuvB-H) stretch occupies residues 256–334 (QHGLDYIDHK…HFNTTNEKRE (79 aa)). Residues R292, R311, and R316 each coordinate DNA.

This sequence belongs to the RuvB family. In terms of assembly, homohexamer. Forms an RuvA(8)-RuvB(12)-Holliday junction (HJ) complex. HJ DNA is sandwiched between 2 RuvA tetramers; dsDNA enters through RuvA and exits via RuvB. An RuvB hexamer assembles on each DNA strand where it exits the tetramer. Each RuvB hexamer is contacted by two RuvA subunits (via domain III) on 2 adjacent RuvB subunits; this complex drives branch migration. In the full resolvosome a probable DNA-RuvA(4)-RuvB(12)-RuvC(2) complex forms which resolves the HJ.

Its subcellular location is the cytoplasm. The catalysed reaction is ATP + H2O = ADP + phosphate + H(+). Its function is as follows. The RuvA-RuvB-RuvC complex processes Holliday junction (HJ) DNA during genetic recombination and DNA repair, while the RuvA-RuvB complex plays an important role in the rescue of blocked DNA replication forks via replication fork reversal (RFR). RuvA specifically binds to HJ cruciform DNA, conferring on it an open structure. The RuvB hexamer acts as an ATP-dependent pump, pulling dsDNA into and through the RuvAB complex. RuvB forms 2 homohexamers on either side of HJ DNA bound by 1 or 2 RuvA tetramers; 4 subunits per hexamer contact DNA at a time. Coordinated motions by a converter formed by DNA-disengaged RuvB subunits stimulates ATP hydrolysis and nucleotide exchange. Immobilization of the converter enables RuvB to convert the ATP-contained energy into a lever motion, pulling 2 nucleotides of DNA out of the RuvA tetramer per ATP hydrolyzed, thus driving DNA branch migration. The RuvB motors rotate together with the DNA substrate, which together with the progressing nucleotide cycle form the mechanistic basis for DNA recombination by continuous HJ branch migration. Branch migration allows RuvC to scan DNA until it finds its consensus sequence, where it cleaves and resolves cruciform DNA. The sequence is that of Holliday junction branch migration complex subunit RuvB from Staphylococcus epidermidis (strain ATCC 35984 / DSM 28319 / BCRC 17069 / CCUG 31568 / BM 3577 / RP62A).